The following is a 545-amino-acid chain: Chaperonin GroEL 5 (545 aa).

Residues 30-33 (TLGP), K51, 87-91 (DGTTT), G415, and D495 each bind ATP.

This sequence belongs to the chaperonin (HSP60) family. Forms a cylinder of 14 subunits composed of two heptameric rings stacked back-to-back. Interacts with the co-chaperonin GroES.

Its subcellular location is the cytoplasm. It catalyses the reaction ATP + H2O + a folded polypeptide = ADP + phosphate + an unfolded polypeptide.. In terms of biological role, together with its co-chaperonin GroES, plays an essential role in assisting protein folding. The GroEL-GroES system forms a nano-cage that allows encapsulation of the non-native substrate proteins and provides a physical environment optimized to promote and accelerate protein folding. The protein is Chaperonin GroEL 5 of Sinorhizobium medicae (strain WSM419) (Ensifer medicae).